We begin with the raw amino-acid sequence, 75 residues long: Conotoxin Vn5.5 (75 aa).

The first 19 residues, 1–19, serve as a signal peptide directing secretion; sequence MLCLPVFIILLLLASPAAP. Positions 20 to 59 are excised as a propeptide; it reads NPLEKRIQSDLIRAALEDADMKTDEREIVNIIDSISDVAK. At Q60 the chain carries Pyrrolidone carboxylic acid.

The protein belongs to the conotoxin T superfamily. In terms of processing, contains 2 disulfide bonds that can be either 'C1-C3, C2-C4' or 'C1-C4, C2-C3', since these disulfide connectivities have been observed for conotoxins with cysteine framework V (for examples, see AC P0DQQ7 and AC P81755). As to expression, expressed by the venom duct.

Its subcellular location is the secreted. The chain is Conotoxin Vn5.5 from Conus ventricosus (Mediterranean cone).